Consider the following 271-residue polypeptide: Thiazole synthase (271 aa).

Lys-95 serves as the catalytic Schiff-base intermediate with DXP. Residues Gly-156, 182–183 (AG), and 204–205 (NT) contribute to the 1-deoxy-D-xylulose 5-phosphate site.

It belongs to the ThiG family. In terms of assembly, homotetramer. Forms heterodimers with either ThiH or ThiS.

The protein resides in the cytoplasm. It catalyses the reaction [ThiS sulfur-carrier protein]-C-terminal-Gly-aminoethanethioate + 2-iminoacetate + 1-deoxy-D-xylulose 5-phosphate = [ThiS sulfur-carrier protein]-C-terminal Gly-Gly + 2-[(2R,5Z)-2-carboxy-4-methylthiazol-5(2H)-ylidene]ethyl phosphate + 2 H2O + H(+). It functions in the pathway cofactor biosynthesis; thiamine diphosphate biosynthesis. Its function is as follows. Catalyzes the rearrangement of 1-deoxy-D-xylulose 5-phosphate (DXP) to produce the thiazole phosphate moiety of thiamine. Sulfur is provided by the thiocarboxylate moiety of the carrier protein ThiS. In vitro, sulfur can be provided by H(2)S. This Yersinia pestis protein is Thiazole synthase.